The chain runs to 375 residues: Putative glutamate--cysteine ligase 2 (375 aa).

This sequence belongs to the glutamate--cysteine ligase type 2 family. YbdK subfamily.

It catalyses the reaction L-cysteine + L-glutamate + ATP = gamma-L-glutamyl-L-cysteine + ADP + phosphate + H(+). Functionally, ATP-dependent carboxylate-amine ligase which exhibits weak glutamate--cysteine ligase activity. This is Putative glutamate--cysteine ligase 2 from Azoarcus sp. (strain BH72).